A 610-amino-acid polypeptide reads, in one-letter code: MCGIVGAVAQRDVAEILINGLHRLEYRGYDSAGVAVINKQNELQRIRCLGKVKALDEAVSEKPLIGGTGIAHTRWATHGEPSETNAHPHSSGTFAVVHNGIIENHEELRELLKSRGYVFLSQTDTEVIAHLVEWEMRTTDSLLDAVKKAVKQLTGAYGMVVMDSRHPEHLVAARSGSPLVIGLGIGENFLASDQLALLSVTRRFIFLEEGDIAEITRRTVDIYDTHGNKAKREIHESNLENDAAEKGKFRHFMQKEIYEQPTALINTMEGRINHENVIVDSIGNGAKGILEKVEHIQIVACGTSYNAGMVARYWFESLAGVSCDVEIASEFRYRKFVTRPNSLLITLSQSGETADTLAALRLAKEKGYMAALTICNVAGSSLVRESDLAFMTRAGVEVGVASTKAFTTQLAALLMLVTALGKVKGHISVEKEREIIKAMQSLPAEIEKALAFDTEIEALAEDFAEKHHALFLGRGAFYPIAVEASLKLKEISYIHAEAYAAGELKHGPLALIDADMPVIVVAPNNELLEKVKSNIEEVRARGGQLYVFADKEAGFTPSEGMKIITMPKVNDIVAPIFYTIPMQLLSYYVALIKGTDVDQPRNLAKSVTVE.

Cysteine 2 (nucleophile; for GATase activity) is an active-site residue. One can recognise a Glutamine amidotransferase type-2 domain in the interval 2–218 (CGIVGAVAQR…EGDIAEITRR (217 aa)). SIS domains lie at 278 to 426 (IVDS…VKGH) and 459 to 600 (LAED…VDQP). The active-site For Fru-6P isomerization activity is the lysine 605.

Homodimer.

The protein localises to the cytoplasm. The enzyme catalyses D-fructose 6-phosphate + L-glutamine = D-glucosamine 6-phosphate + L-glutamate. In terms of biological role, catalyzes the first step in hexosamine metabolism, converting fructose-6P into glucosamine-6P using glutamine as a nitrogen source. The polypeptide is Glutamine--fructose-6-phosphate aminotransferase [isomerizing] (Haemophilus influenzae (strain ATCC 51907 / DSM 11121 / KW20 / Rd)).